The chain runs to 375 residues: Erythronate-4-phosphate dehydrogenase (375 aa).

Residues serine 45 and threonine 66 each contribute to the substrate site. Aspartate 146 and threonine 175 together coordinate NAD(+). Residue arginine 208 is part of the active site. Aspartate 232 is a binding site for NAD(+). Glutamate 237 is a catalytic residue. Catalysis depends on histidine 254, which acts as the Proton donor. NAD(+) is bound at residue glycine 257. Residue tyrosine 258 coordinates substrate.

The protein belongs to the D-isomer specific 2-hydroxyacid dehydrogenase family. PdxB subfamily. As to quaternary structure, homodimer.

It localises to the cytoplasm. It catalyses the reaction 4-phospho-D-erythronate + NAD(+) = (R)-3-hydroxy-2-oxo-4-phosphooxybutanoate + NADH + H(+). The protein operates within cofactor biosynthesis; pyridoxine 5'-phosphate biosynthesis; pyridoxine 5'-phosphate from D-erythrose 4-phosphate: step 2/5. In terms of biological role, catalyzes the oxidation of erythronate-4-phosphate to 3-hydroxy-2-oxo-4-phosphonooxybutanoate. In Edwardsiella ictaluri (strain 93-146), this protein is Erythronate-4-phosphate dehydrogenase.